A 147-amino-acid polypeptide reads, in one-letter code: MKVLLIKDVKALGKAGEIKEVKDGYGQNFLIAKGFAKAATNEVLRKYESDKKKEAENLRFEIANLEKLKEELSKITLEISKPVGANGSLFGGVTKDEIAHALKEQSHIEIDKKSLECDTFKSLGLHEVSVKLGHAIHAKFNINIKAE.

Belongs to the bacterial ribosomal protein bL9 family.

Its function is as follows. Binds to the 23S rRNA. The polypeptide is Large ribosomal subunit protein bL9 (Campylobacter jejuni subsp. jejuni serotype O:6 (strain 81116 / NCTC 11828)).